A 1401-amino-acid chain; its full sequence is Protein dispatched homolog 2 (1401 aa).

Disordered regions lie at residues 1–91 (MDGD…LAPA) and 113–138 (DRAALCSHGSSLSPSPAPSQRDGTWK). The chain crosses the membrane as a helical span at residues 170 to 190 (VAVLMLCLAVIFLCTLAGLLG). N-linked (GlcNAc...) asparagine glycosylation is present at N239. A disordered region spans residues 241–264 (SSSHNTLRPAPRGSAQESAVRPRR). N-linked (GlcNAc...) asparagine glycans are attached at residues N349 and N465. In terms of domain architecture, SSD spans 471-643 (GMDLGLKQEL…LVWLPASAVL (173 aa)). 11 helical membrane-spanning segments follow: residues 484 to 504 (FLVQDTVYPLLALVAIFFGMA), 510 to 530 (LFLTLMVLLGVLGSLLVAFFL), 542 to 562 (FVNLAALLLLSSVCANHTLIF), 589 to 609 (FGYLLLVSGLTTSAAFYASYL), 617 to 637 (CLALFMGTAVLVHLALTLVWL), 704 to 724 (YIWICWFAALAAGGAYIAGVS), 964 to 984 (PAVVLGLALALAFATLLLGTW), 990 to 1010 (LFSVAAVAGTVLLTVGLLVLL), 1019 to 1039 (ALFLSASVGLSVDFTVNYCIS), 1064 to 1084 (AVGAAALFAAGVLMLPATVLL), and 1088 to 1108 (LGIILMMVKCVSCGFASFFFQ). Disordered regions lie at residues 1169-1192 (ARRRSPSFDTSTATSKLSHRPSVL), 1229-1337 (PALQ…NGKR), and 1352-1401 (SLPA…GYSS). The segment covering 1175 to 1184 (SFDTSTATSK) has biased composition (polar residues). A compositionally biased stretch (low complexity) spans 1259–1270 (PLPASPEAPAHS). Polar residues predominate over residues 1284 to 1305 (SSASTLEGLSVSDETCLSTSEP). Low complexity predominate over residues 1352-1362 (SLPASHHSSLS). R1366 is subject to Omega-N-methylarginine.

It belongs to the dispatched family.

It localises to the membrane. This Homo sapiens (Human) protein is Protein dispatched homolog 2.